The sequence spans 1163 residues: Integrin alpha-X (1163 aa).

A signal peptide spans 1 to 19; that stretch reads MTRTRAALLLFTALATSLG. Residues 20-1107 are Extracellular-facing; it reads FNLDTEELTA…EKYKVHNPTP (1088 aa). FG-GAP repeat units lie at residues 23-78 and 79-138; these read DTEE…ACEP and IGLQ…TQRL. N-linked (GlcNAc...) asparagine glycosylation is present at Asn61. A disulfide bridge connects residues Cys69 and Cys76. Residue Asn89 is glycosylated (N-linked (GlcNAc...) asparagine). Cystine bridges form between Cys108-Cys126 and Cys116-Cys145. Residues Asp157, Ser159, Ser161, and Asp259 each contribute to the Mg(2+) site. In terms of domain architecture, VWFA spans 165-339; the sequence is RNFATMMNFV…KEKIFAIEGT (175 aa). FG-GAP repeat units lie at residues 340 to 391, 392 to 443, 444 to 504, 507 to 565, and 570 to 630; these read ETTS…PTFI, NMSQ…SRQW, RMKA…WRRW, DAVL…PSIS, and QRIA…FIPA. A glycan (N-linked (GlcNAc...) asparagine) is linked at Asn392. Ca(2+) is bound by residues Asp466, Asp468, Asp470, and Asp474. Cys495 and Cys506 are joined by a disulfide. Ca(2+)-binding residues include Asp530, Asn532, Asp534, Asp538, Asp593, Asp597, and Asp601. Cystine bridges form between Cys639-Cys722 and Cys655-Cys712. N-linked (GlcNAc...) asparagine glycans are attached at residues Asn697 and Asn735. 2 cysteine pairs are disulfide-bonded: Cys771-Cys777 and Cys848-Cys863. N-linked (GlcNAc...) asparagine glycans are attached at residues Asn899 and Asn939. 2 disulfides stabilise this stretch: Cys998-Cys1022 and Cys1027-Cys1032. A glycan (N-linked (GlcNAc...) asparagine) is linked at Asn1050. A helical transmembrane segment spans residues 1108–1128; the sequence is LIVGSSIGGLLLLALITAVLY. Residues 1129-1163 are Cytoplasmic-facing; it reads KVGFFKRQYKEMMEEANGQIAPENGTQTPSPPSEK. Positions 1131 to 1135 match the GFFKR motif motif; that stretch reads GFFKR.

Belongs to the integrin alpha chain family. Heterodimer of an alpha and a beta subunit. Alpha-X associates with beta-2. Predominantly expressed in monocytes and granulocytes.

The protein resides in the membrane. Integrin alpha-X/beta-2 is a receptor for fibrinogen. It recognizes the sequence G-P-R in fibrinogen. It mediates cell-cell interaction during inflammatory responses. It is especially important in monocyte adhesion and chemotaxis. This Homo sapiens (Human) protein is Integrin alpha-X (ITGAX).